The following is a 243-amino-acid chain: Type III pantothenate kinase (243 aa).

6 to 13 is a binding site for ATP; that stretch reads DGGNTFIK. Residues Tyr87 and 94–97 each bind substrate; that span reads GKDR. The Proton acceptor role is filled by Asp96. Asp117 contacts K(+). Residue Thr120 participates in ATP binding. Thr172 is a substrate binding site.

This sequence belongs to the type III pantothenate kinase family. As to quaternary structure, homodimer. The cofactor is NH4(+). K(+) is required as a cofactor.

The protein localises to the cytoplasm. The enzyme catalyses (R)-pantothenate + ATP = (R)-4'-phosphopantothenate + ADP + H(+). Its pathway is cofactor biosynthesis; coenzyme A biosynthesis; CoA from (R)-pantothenate: step 1/5. In terms of biological role, catalyzes the phosphorylation of pantothenate (Pan), the first step in CoA biosynthesis. The chain is Type III pantothenate kinase from Christiangramia forsetii (strain DSM 17595 / CGMCC 1.15422 / KT0803) (Gramella forsetii).